A 490-amino-acid polypeptide reads, in one-letter code: Acetyl-coenzyme A carboxylase carboxyl transferase subunit beta, chloroplastic (490 aa).

The disordered stretch occupies residues 184 to 203 (LNSSENEGSSRRTRTKGSDL). In terms of domain architecture, CoA carboxyltransferase N-terminal spans 221-490 (LWVQCENCYG…PLNQKSSKIK (270 aa)). The Zn(2+) site is built by Cys225, Cys228, Cys244, and Cys247. The C4-type zinc finger occupies 225 to 247 (CENCYGLNYKKFLKSKMNICEQC).

The protein belongs to the AccD/PCCB family. As to quaternary structure, acetyl-CoA carboxylase is a heterohexamer composed of biotin carboxyl carrier protein, biotin carboxylase and 2 subunits each of ACCase subunit alpha and ACCase plastid-coded subunit beta (accD). It depends on Zn(2+) as a cofactor. As to expression, RNA expressed in leaf, root, stem, and tuber; the least expression occurs in stems. RNA persists even in senescent leaves.

Its subcellular location is the plastid. It localises to the chloroplast stroma. It catalyses the reaction N(6)-carboxybiotinyl-L-lysyl-[protein] + acetyl-CoA = N(6)-biotinyl-L-lysyl-[protein] + malonyl-CoA. The protein operates within lipid metabolism; malonyl-CoA biosynthesis; malonyl-CoA from acetyl-CoA: step 1/1. Functionally, component of the acetyl coenzyme A carboxylase (ACC) complex. Biotin carboxylase (BC) catalyzes the carboxylation of biotin on its carrier protein (BCCP) and then the CO(2) group is transferred by the transcarboxylase to acetyl-CoA to form malonyl-CoA. This chain is Acetyl-coenzyme A carboxylase carboxyl transferase subunit beta, chloroplastic, found in Solanum tuberosum (Potato).